The following is a 347-amino-acid chain: Protein-glutamate methylesterase/protein-glutamine glutaminase 4 (347 aa).

Residues 3-121 enclose the Response regulatory domain; the sequence is KVLIVDDSAS…HPNHEREARS (119 aa). A 4-aspartylphosphate modification is found at Asp-54. Residues 157 to 342 form the CheB-type methylesterase domain; that stretch reads PARLKAVAIG…PDRIVTALTS (186 aa). Active-site residues include Ser-168, His-195, and Asp-289.

Belongs to the CheB family. Phosphorylated by CheA. Phosphorylation of the N-terminal regulatory domain activates the methylesterase activity.

The protein resides in the cytoplasm. It catalyses the reaction [protein]-L-glutamate 5-O-methyl ester + H2O = L-glutamyl-[protein] + methanol + H(+). The catalysed reaction is L-glutaminyl-[protein] + H2O = L-glutamyl-[protein] + NH4(+). Its function is as follows. Involved in chemotaxis. Part of a chemotaxis signal transduction system that modulates chemotaxis in response to various stimuli. Catalyzes the demethylation of specific methylglutamate residues introduced into the chemoreceptors (methyl-accepting chemotaxis proteins or MCP) by CheR. Also mediates the irreversible deamidation of specific glutamine residues to glutamic acid. The protein is Protein-glutamate methylesterase/protein-glutamine glutaminase 4 of Geobacter metallireducens (strain ATCC 53774 / DSM 7210 / GS-15).